A 537-amino-acid chain; its full sequence is 2-succinyl-5-enolpyruvyl-6-hydroxy-3-cyclohexene-1-carboxylate synthase (537 aa).

This sequence belongs to the TPP enzyme family. MenD subfamily. As to quaternary structure, homodimer. The cofactor is Mg(2+). Mn(2+) is required as a cofactor. Thiamine diphosphate serves as cofactor.

It carries out the reaction isochorismate + 2-oxoglutarate + H(+) = 5-enolpyruvoyl-6-hydroxy-2-succinyl-cyclohex-3-ene-1-carboxylate + CO2. It participates in quinol/quinone metabolism; 1,4-dihydroxy-2-naphthoate biosynthesis; 1,4-dihydroxy-2-naphthoate from chorismate: step 2/7. Its pathway is quinol/quinone metabolism; menaquinone biosynthesis. In terms of biological role, catalyzes the thiamine diphosphate-dependent decarboxylation of 2-oxoglutarate and the subsequent addition of the resulting succinic semialdehyde-thiamine pyrophosphate anion to isochorismate to yield 2-succinyl-5-enolpyruvyl-6-hydroxy-3-cyclohexene-1-carboxylate (SEPHCHC). This Nocardioides sp. (strain ATCC BAA-499 / JS614) protein is 2-succinyl-5-enolpyruvyl-6-hydroxy-3-cyclohexene-1-carboxylate synthase.